The primary structure comprises 463 residues: Kynurenine 3-monooxygenase (463 aa).

The protein belongs to the aromatic-ring hydroxylase family. KMO subfamily. FAD is required as a cofactor.

The protein localises to the mitochondrion outer membrane. It carries out the reaction L-kynurenine + NADPH + O2 + H(+) = 3-hydroxy-L-kynurenine + NADP(+) + H2O. It functions in the pathway cofactor biosynthesis; NAD(+) biosynthesis; quinolinate from L-kynurenine: step 1/3. Its function is as follows. Catalyzes the hydroxylation of L-kynurenine (L-Kyn) to form 3-hydroxy-L-kynurenine (L-3OHKyn). Required for synthesis of quinolinic acid. This is Kynurenine 3-monooxygenase from Yarrowia lipolytica (strain CLIB 122 / E 150) (Yeast).